We begin with the raw amino-acid sequence, 337 residues long: Cysteine synthase 3 (337 aa).

K47 carries the post-translational modification N6-(pyridoxal phosphate)lysine. Residues N78, 182–186 (GSSGT), and S270 each bind pyridoxal 5'-phosphate.

It belongs to the cysteine synthase/cystathionine beta-synthase family. In terms of assembly, homodimer. Pyridoxal 5'-phosphate is required as a cofactor.

It catalyses the reaction O-acetyl-L-serine + hydrogen sulfide = L-cysteine + acetate. It functions in the pathway amino-acid biosynthesis; L-cysteine biosynthesis; L-cysteine from L-serine: step 2/2. Functionally, primarily catalyzes the formation of cysteine and acetate from O-acetylserine and hydrogen sulfide. Can also catalyze the formation of cysteine and acetate from S-sulfocysteine and hydrogen sulfide and the formation of cyanoalanine and hydrogen sulfide from either S-sulfocysteine or O-acetylserine and hydrogen cyanide. This Caenorhabditis elegans protein is Cysteine synthase 3.